The sequence spans 313 residues: tRNA dimethylallyltransferase (313 aa).

11-18 is a binding site for ATP; the sequence is GPTASGKT. 13–18 is a substrate binding site; the sequence is TASGKT. Interaction with substrate tRNA regions lie at residues 36 to 39 and 160 to 164; these read DSRQ and QRLIR.

It belongs to the IPP transferase family. As to quaternary structure, monomer. Requires Mg(2+) as cofactor.

The enzyme catalyses adenosine(37) in tRNA + dimethylallyl diphosphate = N(6)-dimethylallyladenosine(37) in tRNA + diphosphate. Its function is as follows. Catalyzes the transfer of a dimethylallyl group onto the adenine at position 37 in tRNAs that read codons beginning with uridine, leading to the formation of N6-(dimethylallyl)adenosine (i(6)A). This chain is tRNA dimethylallyltransferase, found in Chlorobaculum parvum (strain DSM 263 / NCIMB 8327) (Chlorobium vibrioforme subsp. thiosulfatophilum).